A 129-amino-acid chain; its full sequence is MMARRTKARKKEKKHVEQGVAHIKSTFNNTIVTITDPQGNTLSWASAGTVGFEGTRKGTPFAAQLAAEKAAKEAMEFGVKTVEVYVKGPGAGREAAIRSLQAAGLEVSLIKDVTPIPHNGCRPPKRRRV.

Belongs to the universal ribosomal protein uS11 family. In terms of assembly, part of the 30S ribosomal subunit. Interacts with proteins S7 and S18. Binds to IF-3.

Its function is as follows. Located on the platform of the 30S subunit, it bridges several disparate RNA helices of the 16S rRNA. Forms part of the Shine-Dalgarno cleft in the 70S ribosome. In Carboxydothermus hydrogenoformans (strain ATCC BAA-161 / DSM 6008 / Z-2901), this protein is Small ribosomal subunit protein uS11.